Reading from the N-terminus, the 1187-residue chain is DNA excision repair protein CSB (1187 aa).

The span at 31–43 (QATTDPADSSGPT) shows a compositional bias: polar residues. Disordered stretches follow at residues 31 to 53 (QATTDPADSSGPTINGGHQPDDA), 75 to 102 (IKGAKLKQPSGNKPHEHKGKDQPDHHGA), 217 to 242 (KRVELPEPSHRQDDSAGQTEEAMEAS), and 265 to 351 (DSES…EGSD). Composition is skewed to basic and acidic residues over residues 92 to 101 (KGKDQPDHHG) and 217 to 230 (KRVELPEPSHRQDD). A compositionally biased stretch (basic residues) spans 300 to 319 (KRPRNKTKRPLPGKKWRKAN). Over residues 339-351 (SDDDEDQVTEGSD) the composition is skewed to acidic residues. One can recognise a Helicase ATP-binding domain in the interval 384-580 (WELHCQRAGG…WSLFDFVFPG (197 aa)). Position 397-404 (397-404 (DEMGLGKT)) interacts with ATP. The interval 457 to 480 (SSSKKSKRSSDSDSEASWDSDQEE) is disordered. The span at 468-480 (SDSEASWDSDQEE) shows a compositional bias: acidic residues. The short motif at 531–534 (DEGH) is the DEGH box element. Residues 716–876 (KVVEQVLKVW…RRFFKARDMK (161 aa)) form the Helicase C-terminal domain. Disordered regions lie at residues 916-945 (LYAASATPTTSGTEPSSSRHGQGKEDHCPD) and 1095-1116 (GSASNHTSSSSGNGRASSSSTR). Residues 918–933 (AASATPTTSGTEPSSS) show a composition bias toward low complexity.

It belongs to the SNF2/RAD54 helicase family. Homodimer. Binds DNA. As to expression, expressed in proliferating tissues. Highly expressed in shoot apical meristem (SAM). Expressed in roots, young leaves, flag leaves, and panicles. Expressed at very low levels in mature leaves.

Its subcellular location is the nucleus. Essential factor involved in transcription-coupled nucleotide excision repair (TCR) which allows RNA polymerase II-blocking lesions to be rapidly removed from the transcribed strand of active genes. Upon DNA-binding, it locally modifies DNA conformation by wrapping the DNA around itself, thereby modifying the interface between stalled RNA polymerase II and DNA. It is required for transcription-coupled repair complex formation. The sequence is that of DNA excision repair protein CSB from Oryza sativa subsp. japonica (Rice).